Reading from the N-terminus, the 513-residue chain is MQLSPSEISGLIKQRIEKFDNSVELKSEGTIVSVADGIVTIYGLNDVTAGEMIKLPGDVYGLALNLNTDSVGAVVLGDYEHIKEGDKAYCTGRILEVPVGEALLGRVVDALGNPIDGKGEVATDLTSPIEKIAPGVIWRKSVDQALQTGIKSIDSMVPIGRGQRELIIGDRQIGKTAIAVDTIINQKGTGVKCIYVAIGQKASTIANIVRQLEEYGAMEHTIIVAATASDSAALQYIAPYAGCSMGEYFRDRGQDALIVYDDLTKQAWAYRQISLLLRRPPGREAYPGDVFYLHSRLLERAARVNEEYVEKFTNGEVKGKTGSLTALPIIETQAGDISAFVPTNVISITDGQIFLETDLFNSGLRPAINPGNSVSRVGGAAQTKIIKKLGGGIRLALAQYRELEAFSQFASDLDEATRAQLNRGQRVTELLKQKQFSTLSVALMALSLYAADNGYLDNLEVSEVIPFESALHALAETKYSDVIAEINETDKYDADIADKLKIIVEDCKANQAW.

An ATP-binding site is contributed by 169–176; sequence GDRQIGKT.

The protein belongs to the ATPase alpha/beta chains family. As to quaternary structure, F-type ATPases have 2 components, CF(1) - the catalytic core - and CF(0) - the membrane proton channel. CF(1) has five subunits: alpha(3), beta(3), gamma(1), delta(1), epsilon(1). CF(0) has three main subunits: a(1), b(2) and c(9-12). The alpha and beta chains form an alternating ring which encloses part of the gamma chain. CF(1) is attached to CF(0) by a central stalk formed by the gamma and epsilon chains, while a peripheral stalk is formed by the delta and b chains.

It localises to the cell inner membrane. The enzyme catalyses ATP + H2O + 4 H(+)(in) = ADP + phosphate + 5 H(+)(out). Produces ATP from ADP in the presence of a proton gradient across the membrane. The alpha chain is a regulatory subunit. The polypeptide is ATP synthase subunit alpha (Francisella tularensis subsp. holarctica (strain OSU18)).